A 485-amino-acid chain; its full sequence is Glutamyl-tRNA(Gln) amidotransferase subunit A (485 aa).

Catalysis depends on charge relay system residues Lys75 and Ser150. Ser174 serves as the catalytic Acyl-ester intermediate.

It belongs to the amidase family. GatA subfamily. Heterotrimer of A, B and C subunits.

It carries out the reaction L-glutamyl-tRNA(Gln) + L-glutamine + ATP + H2O = L-glutaminyl-tRNA(Gln) + L-glutamate + ADP + phosphate + H(+). Functionally, allows the formation of correctly charged Gln-tRNA(Gln) through the transamidation of misacylated Glu-tRNA(Gln) in organisms which lack glutaminyl-tRNA synthetase. The reaction takes place in the presence of glutamine and ATP through an activated gamma-phospho-Glu-tRNA(Gln). The sequence is that of Glutamyl-tRNA(Gln) amidotransferase subunit A from Picosynechococcus sp. (strain ATCC 27264 / PCC 7002 / PR-6) (Agmenellum quadruplicatum).